Reading from the N-terminus, the 302-residue chain is Tritrans,polycis-undecaprenyl-diphosphate synthase (geranylgeranyl-diphosphate specific) (302 aa).

Aspartate 33 is a catalytic residue. Aspartate 33 provides a ligand contact to Mg(2+). Substrate contacts are provided by residues glycine 34–arginine 37 and serine 78–glutamate 80. The active-site Proton acceptor is asparagine 81. Substrate is bound by residues phenylalanine 82, arginine 84, arginine 203, and arginine 209 to serine 211.

It belongs to the UPP synthase family. As to quaternary structure, homodimer. Mg(2+) serves as cofactor.

The enzyme catalyses geranylgeranyl diphosphate + 7 isopentenyl diphosphate = tri-trans,hepta-cis-undecaprenyl diphosphate + 7 diphosphate. Its function is as follows. Catalyzes the sequential condensation of isopentenyl diphosphate (IPP) with geranylgeranyl diphosphate (GGPP) to yield (2Z,6Z,10Z,14Z,18Z,22Z,26Z,30E,34E,38E)-undecaprenyl diphosphate (tritrans,heptacis-UPP). It is probably the precursor of glycosyl carrier lipids. The chain is Tritrans,polycis-undecaprenyl-diphosphate synthase (geranylgeranyl-diphosphate specific) from Halobacterium salinarum (strain ATCC 700922 / JCM 11081 / NRC-1) (Halobacterium halobium).